Here is a 378-residue protein sequence, read N- to C-terminus: Chaperone protein DnaJ 2 (378 aa).

Positions 4-68 (DYYAVLGVRR…QKKQVYDLGG (65 aa)) constitute a J domain. A CR-type zinc finger spans residues 130 to 212 (GTTKDIQVET…CAGDGRVRSR (83 aa)). The Zn(2+) site is built by Cys143, Cys146, Cys160, Cys163, Cys186, Cys189, Cys200, and Cys203. CXXCXGXG motif repeat units lie at residues 143–150 (CTTCSGEG), 160–167 (CDMCRGRG), 186–193 (CPQCQGFG), and 200–207 (CPECAGDG). Positions 351 to 378 (RGEERPTGQFQPGQQGLFSRLKDAFNGR) are disordered. A compositionally biased stretch (polar residues) spans 358–367 (GQFQPGQQGL).

This sequence belongs to the DnaJ family. As to quaternary structure, homodimer. Zn(2+) serves as cofactor.

Its subcellular location is the cytoplasm. Functionally, participates actively in the response to hyperosmotic and heat shock by preventing the aggregation of stress-denatured proteins and by disaggregating proteins, also in an autonomous, DnaK-independent fashion. Unfolded proteins bind initially to DnaJ; upon interaction with the DnaJ-bound protein, DnaK hydrolyzes its bound ATP, resulting in the formation of a stable complex. GrpE releases ADP from DnaK; ATP binding to DnaK triggers the release of the substrate protein, thus completing the reaction cycle. Several rounds of ATP-dependent interactions between DnaJ, DnaK and GrpE are required for fully efficient folding. Also involved, together with DnaK and GrpE, in the DNA replication of plasmids through activation of initiation proteins. The protein is Chaperone protein DnaJ 2 of Streptomyces avermitilis (strain ATCC 31267 / DSM 46492 / JCM 5070 / NBRC 14893 / NCIMB 12804 / NRRL 8165 / MA-4680).